A 565-amino-acid polypeptide reads, in one-letter code: Oxygen-dependent choline dehydrogenase (565 aa).

FAD is bound at residue 6 to 35 (DYIIVGAGSAGNTLATRLTEDAGVTVLLLE). Residue His-475 is the Proton acceptor of the active site.

It belongs to the GMC oxidoreductase family. The cofactor is FAD.

The catalysed reaction is choline + A = betaine aldehyde + AH2. The enzyme catalyses betaine aldehyde + NAD(+) + H2O = glycine betaine + NADH + 2 H(+). Its pathway is amine and polyamine biosynthesis; betaine biosynthesis via choline pathway; betaine aldehyde from choline (cytochrome c reductase route): step 1/1. Functionally, involved in the biosynthesis of the osmoprotectant glycine betaine. Catalyzes the oxidation of choline to betaine aldehyde and betaine aldehyde to glycine betaine at the same rate. The chain is Oxygen-dependent choline dehydrogenase from Pseudomonas putida (strain ATCC 700007 / DSM 6899 / JCM 31910 / BCRC 17059 / LMG 24140 / F1).